A 181-amino-acid polypeptide reads, in one-letter code: Adenine phosphoribosyltransferase (181 aa).

Belongs to the purine/pyrimidine phosphoribosyltransferase family. In terms of assembly, homodimer.

Its subcellular location is the cytoplasm. The catalysed reaction is AMP + diphosphate = 5-phospho-alpha-D-ribose 1-diphosphate + adenine. It participates in purine metabolism; AMP biosynthesis via salvage pathway; AMP from adenine: step 1/1. Its function is as follows. Catalyzes a salvage reaction resulting in the formation of AMP, that is energically less costly than de novo synthesis. The sequence is that of Adenine phosphoribosyltransferase from Colwellia psychrerythraea (strain 34H / ATCC BAA-681) (Vibrio psychroerythus).